The chain runs to 338 residues: Fructose-1,6-bisphosphatase 1 (338 aa).

Residue threonine 2 is modified to N-acetylthreonine. AMP-binding positions include 18-22 (VMEEG) and 28-32 (TGEMT). The Mg(2+) site is built by aspartate 69 and glutamate 98. AMP is bound at residue 113–114 (KY). Mg(2+)-binding residues include aspartate 119, leucine 121, and aspartate 122. 122–125 (DGSS) lines the substrate pocket. An AMP-binding site is contributed by lysine 141. Lysine 151 bears the N6-succinyllysine mark. Position 208 is a phosphoserine (serine 208). Substrate-binding positions include 213-216 (NEGY), 244-249 (RYVGSM), tyrosine 265, and 275-277 (KLR). 3 positions are modified to phosphotyrosine: tyrosine 216, tyrosine 245, and tyrosine 265. Residue glutamate 281 coordinates Mg(2+).

This sequence belongs to the FBPase class 1 family. In terms of assembly, homotetramer. Requires Mg(2+) as cofactor.

It carries out the reaction beta-D-fructose 1,6-bisphosphate + H2O = beta-D-fructose 6-phosphate + phosphate. The protein operates within carbohydrate biosynthesis; gluconeogenesis. Its activity is regulated as follows. Subject to complex allosteric regulation. The enzyme can assume an active R-state, or an inactive T-state. Intermediate conformations may exist. AMP acts as an allosteric inhibitor. AMP binding affects the turnover of bound substrate and not the affinity for substrate. Fructose 2,6-bisphosphate acts as a competitive inhibitor. Fructose 2,6-bisphosphate and AMP have synergistic effects. Catalyzes the hydrolysis of fructose 1,6-bisphosphate to fructose 6-phosphate in the presence of divalent cations, acting as a rate-limiting enzyme in gluconeogenesis. Plays a role in regulating glucose sensing and insulin secretion of pancreatic beta-cells. Appears to modulate glycerol gluconeogenesis in liver. Important regulator of appetite and adiposity; increased expression of the protein in liver after nutrient excess increases circulating satiety hormones and reduces appetite-stimulating neuropeptides and thus seems to provide a feedback mechanism to limit weight gain. This chain is Fructose-1,6-bisphosphatase 1 (FBP1), found in Bos taurus (Bovine).